The chain runs to 657 residues: Translation factor GUF1, mitochondrial (657 aa).

A mitochondrion-targeting transit peptide spans methionine 1–asparagine 39. The region spanning glutamate 59–valine 239 is the tr-type G domain. Residues threonine 109–serine 116, leucine 173–glutamate 177, and leucine 227–threonine 230 each bind GTP.

Belongs to the TRAFAC class translation factor GTPase superfamily. Classic translation factor GTPase family. LepA subfamily.

It is found in the mitochondrion inner membrane. The catalysed reaction is GTP + H2O = GDP + phosphate + H(+). Its function is as follows. Promotes mitochondrial protein synthesis. May act as a fidelity factor of the translation reaction, by catalyzing a one-codon backward translocation of tRNAs on improperly translocated ribosomes. Binds to mitochondrial ribosomes in a GTP-dependent manner. This Ajellomyces capsulatus (strain NAm1 / WU24) (Darling's disease fungus) protein is Translation factor GUF1, mitochondrial.